The primary structure comprises 360 residues: Phenylalanine--tRNA ligase alpha subunit (360 aa).

E260 provides a ligand contact to Mg(2+).

The protein belongs to the class-II aminoacyl-tRNA synthetase family. Phe-tRNA synthetase alpha subunit type 1 subfamily. In terms of assembly, tetramer of two alpha and two beta subunits. Mg(2+) serves as cofactor.

It localises to the cytoplasm. It catalyses the reaction tRNA(Phe) + L-phenylalanine + ATP = L-phenylalanyl-tRNA(Phe) + AMP + diphosphate + H(+). This Cereibacter sphaeroides (strain ATCC 17029 / ATH 2.4.9) (Rhodobacter sphaeroides) protein is Phenylalanine--tRNA ligase alpha subunit.